A 336-amino-acid polypeptide reads, in one-letter code: Glucan endo-1,3-beta-glucosidase A (336 aa).

A signal peptide spans 1–23; sequence MAFLSSLLASLLLVGLLIQITGA. Gln-24 bears the Pyrrolidone carboxylic acid mark. Catalysis depends on Glu-118, which acts as the Proton donor. The Nucleophile role is filled by Glu-257.

Belongs to the glycosyl hydrolase 17 family.

It localises to the secreted. The protein localises to the extracellular space. The enzyme catalyses Hydrolysis of (1-&gt;3)-beta-D-glucosidic linkages in (1-&gt;3)-beta-D-glucans.. Functionally, implicated in the defense of plants against pathogens. This chain is Glucan endo-1,3-beta-glucosidase A, found in Solanum lycopersicum (Tomato).